The chain runs to 567 residues: Dihydrolipoyllysine-residue acetyltransferase component of pyruvate dehydrogenase complex (567 aa).

Lipoyl-binding domains lie at 2–75 (SKQI…LVLE) and 108–181 (IVEV…MRFE). N6-lipoyllysine is present on residues lysine 41 and lysine 147. Residues 192–238 (SAPASTSAPQTAAPATTAQAPQAAAPDTTAQAPQAAAPDTTAQAAQS) show a composition bias toward low complexity. The disordered stretch occupies residues 192-249 (SAPASTSAPQTAAPATTAQAPQAAAPDTTAQAPQAAAPDTTAQAAQSNNNVSGLSQEQ). The segment covering 239–249 (NNNVSGLSQEQ) has biased composition (polar residues). The Peripheral subunit-binding (PSBD) domain maps to 258–295 (HATPVIRRLAREFGVNLDKVKGTGRKGRIVKEDIEAYV). Active-site residues include cysteine 484, histidine 540, and aspartate 544.

Belongs to the 2-oxoacid dehydrogenase family. Forms a 24-polypeptide structural core with octahedral symmetry. The cofactor is (R)-lipoate.

The enzyme catalyses N(6)-[(R)-dihydrolipoyl]-L-lysyl-[protein] + acetyl-CoA = N(6)-[(R)-S(8)-acetyldihydrolipoyl]-L-lysyl-[protein] + CoA. In terms of biological role, the pyruvate dehydrogenase complex catalyzes the overall conversion of pyruvate to acetyl-CoA and CO(2). It contains multiple copies of three enzymatic components: pyruvate dehydrogenase (E1), dihydrolipoamide acetyltransferase (E2) and lipoamide dehydrogenase (E3). This is Dihydrolipoyllysine-residue acetyltransferase component of pyruvate dehydrogenase complex (aceF) from Haemophilus influenzae (strain ATCC 51907 / DSM 11121 / KW20 / Rd).